A 374-amino-acid chain; its full sequence is WAT1-related protein At2g39510 (374 aa).

10 helical membrane-spanning segments follow: residues 9-29 (FITV…AKFA), 38-58 (VLAS…AYFL), 64-84 (PKMT…EPTI), 99-119 (TFTA…AWIF), 135-155 (ILGT…KGPL), 182-202 (GASL…LQAI), 212-232 (SLTA…ALFI), 249-269 (LAAV…QGVI), 284-304 (LSMV…MFLG), and 306-326 (ILGA…KSKD). 2 consecutive EamA domains span residues 19–147 (YAGL…GAML) and 191–320 (ICWA…YSVL). The segment at 350–374 (SKANAKMDTNDASVVISRPNTNESV) is disordered.

It belongs to the drug/metabolite transporter (DMT) superfamily. Plant drug/metabolite exporter (P-DME) (TC 2.A.7.4) family.

Its subcellular location is the membrane. The protein is WAT1-related protein At2g39510 of Arabidopsis thaliana (Mouse-ear cress).